The following is a 2715-amino-acid chain: Histone-lysine N-methyltransferase 2B (2715 aa).

Gly residues predominate over residues 1 to 11 (MAAAAGGGSCP). Disordered regions lie at residues 1–65 (MAAA…GEDT), 81–302 (RRLW…GGLP), 320–518 (SLGL…PKST), and 532–771 (VSAR…QMPP). Ala2 carries the post-translational modification N-acetylalanine. A compositionally biased stretch (low complexity) spans 12-24 (GPGSARGRFPGRP). The Menin-binding motif (MBM) signature appears at 17–36 (RGRFPGRPRGAGGGGGRGGR). Composition is skewed to gly residues over residues 25 to 38 (RGAG…GRGN) and 49 to 60 (RGGGATGPGGAE). The segment at residues 37–44 (GNGAERVR) is a DNA-binding region (a.T hook 1). Over residues 109–123 (PEEESSDGESDEEEF) the composition is skewed to acidic residues. Positions 110–117 (EEESSDGE) form a DNA-binding region, a.T hook 2. Phosphoserine occurs at positions 113, 114, and 118. Residues 144 to 158 (QRGRAPRGRGRKHKT) show a composition bias toward basic residues. The span at 160–176 (PLPPPRLADVAPTPPKT) shows a compositional bias: pro residues. Residues 199–208 (RAQAPQAPRS) are compositionally biased toward low complexity. At Ser351 the chain carries Phosphoserine. A DNA-binding region (a.T hook 3) is located at residues 357–365 (QEQKLDDEE). Residues 361 to 374 (LDDEEEEKKEEEEK) are compositionally biased toward acidic residues. Positions 375-387 (DKEGEEKEERAVA) are enriched in basic and acidic residues. The span at 401–449 (LPPPPLTPPAPSPPPPLPPPSTSPPPPLCPPPPPPVSPPPLPSPPPPPA) shows a compositional bias: pro residues. Over residues 545-556 (RFMDEDPPKPPK) the composition is skewed to basic and acidic residues. A compositionally biased stretch (pro residues) spans 568–596 (TTSPPVPQEPAPVPSPPRAPTPPSTPVPL). Residues 597–608 (PEKRRSILREPT) show a composition bias toward basic and acidic residues. A compositionally biased stretch (pro residues) spans 618-637 (LPPPPPAPPPPPAPSPPPAP). Residues 731 to 751 (PQTQAQLLQPLQALQTQLLPQ) show a composition bias toward low complexity. A compositionally biased stretch (pro residues) spans 752–769 (ALPPPQPQLQPPPSPQQM). Lys805 is covalently cross-linked (Glycyl lysine isopeptide (Lys-Gly) (interchain with G-Cter in SUMO2)). 2 disordered regions span residues 819 to 868 (PLSP…GPRI) and 894 to 959 (SALP…HHGK). A phosphoserine mark is found at Ser821, Ser844, and Ser861. A compositionally biased stretch (basic and acidic residues) spans 836–857 (ISDRGPVRSEDESVEAKRERPS). Residues 907 to 917 (EDTSSASETES) show a composition bias toward low complexity. Ser936 is subject to Phosphoserine. Positions 948 to 959 (TPRRSLPSHHGK) are enriched in basic residues. A CXXC-type zinc finger spans residues 959 to 1006 (KKMRMARCGHCRGCLRVQDCGSCVNCLDKPKFGGPNTKKQCCVYRKCD). Zn(2+)-binding residues include Cys966, Cys969, Cys972, Cys978, Cys981, Cys984, Cys1000, and Cys1005. The disordered stretch occupies residues 1027–1132 (LLPWDSDESP…RPRKPTLQPV (106 aa)). Phosphoserine occurs at positions 1032, 1035, 1092, and 1095. Lys1136 is covalently cross-linked (Glycyl lysine isopeptide (Lys-Gly) (interchain with G-Cter in SUMO2)). The tract at residues 1146 to 1166 (LAPGPFASFPNGWTGKQKSPD) is disordered. PHD-type zinc fingers lie at residues 1201–1252 (PMVC…CKFC), 1249–1303 (CKFC…CVRC), and 1335–1396 (GNYC…CAGA). Residues 1404–1504 (ALSGALQGGL…GLLLKLLESA (101 aa)) form the Bromo domain. Residues 1545–1567 (QQEPETPESGQPPGDPSAAFQGK) form a disordered region. The C2HC pre-PHD-type zinc-finger motif lies at 1578 to 1618 (PRQCALCLKYGDADSKEAGRLLYIGQNEWTHVNCAIWSAEV). The segment at 1639–1686 (MRCELCLKPGATVGCCLSSCLSNFHFMCARASYCIFQDDKKVFCQKHT) adopts a PHD-type 4 zinc-finger fold. One can recognise an FYR N-terminal domain in the interval 1727 to 1783 (AINVLIGSIRIDSLGTLSDLSDCEGRLFPIGYQCSRLYWSTVDARRRCWYRCRILEY). 4 disordered regions span residues 1806–1978 (HSPA…PDFE), 2008–2093 (VAAG…VVRA), 2118–2162 (LKNL…PTRT), and 2280–2412 (RVST…RTGP). Residues 1876-1894 (PLGGVSFGPLPSPGSPSSL) are compositionally biased toward low complexity. Phosphoserine occurs at positions 1930 and 1936. Residues 1960-1972 (PPGPAPSPPPPED) show a composition bias toward pro residues. Positions 2062–2072 (DGVDDGTDSEA) are enriched in acidic residues. Thr2068 and Thr2083 each carry phosphothreonine. The span at 2144 to 2153 (NGSQPSQGLT) shows a compositional bias: polar residues. A phosphoserine mark is found at Ser2288 and Ser2348. The span at 2342–2351 (EPAGEESPGP) shows a compositional bias: low complexity. The span at 2359 to 2373 (LPLPEDGPPQVPDGP) shows a compositional bias: pro residues. The 82-residue stretch at 2411–2492 (GPHLRFEISS…QRCQHYKFRY (82 aa)) folds into the FYR C-terminal domain. Residues 2508–2513 (GAARAE) carry the WDR5 interaction motif (WIN) motif. The 117-residue stretch at 2575–2691 (EAVGVYRSAI…RGEELTYDYK (117 aa)) folds into the SET domain. Residues His2585, Arg2587, Tyr2629, and 2652 to 2653 (NH) each bind S-adenosyl-L-methionine. Residues Cys2655 and Cys2703 each contribute to the Zn(2+) site. The Post-SET domain maps to 2699–2715 (NKLPCNCGAKRCRRFLN). Asn2704 is an S-adenosyl-L-methionine binding site. Cys2705 and Cys2710 together coordinate Zn(2+).

Belongs to the class V-like SAM-binding methyltransferase superfamily. Histone-lysine methyltransferase family. TRX/MLL subfamily. Component of the menin-associated histone methyltransferase complex, at least composed of KMT2B/MLL4, ASH2L, RBBP5, WDR5, DPY30, MEN1; the complex interacts with POLR2A and POLR2B via MEN1. Interacts with NFE2. Interacts with KDM6B. Interacts (via WIN motif) with WDR5. Interacts (via MBM motif) with MEN1. Forms a core complex with the evolutionary conserved subcomplex WRAD composed of WDR5, RBBP5, ASH2L/ASH2 and DPY30 subunits; WRAD differentially stimulates the methyltransferase activity. As to expression, widely expressed. Highest levels in testis. Also found in brain with higher expression in the cerebellum than in any other region, bone marrow, heart, muscle, kidney, placenta, spleen, thymus, prostate, ovary, intestine, colon, peripheral blood lymphocytes and pancreas. Often amplified in pancreatic carcinomas.

It is found in the nucleus. The catalysed reaction is L-lysyl(4)-[histone H3] + S-adenosyl-L-methionine = N(6)-methyl-L-lysyl(4)-[histone H3] + S-adenosyl-L-homocysteine + H(+). The enzyme catalyses N(6)-methyl-L-lysyl(4)-[histone H3] + S-adenosyl-L-methionine = N(6),N(6)-dimethyl-L-lysyl(4)-[histone H3] + S-adenosyl-L-homocysteine + H(+). Histone methyltransferase that catalyzes methyl group transfer from S-adenosyl-L-methionine to the epsilon-amino group of 'Lys-4' of histone H3 (H3K4) via a non-processive mechanism. Part of chromatin remodeling machinery predominantly forms H3K4me1 and H3K4me2 methylation marks at active chromatin sites where transcription and DNA repair take place. Likely plays a redundant role with KMT2C in enriching H3K4me1 marks on primed and active enhancer elements. Plays a central role in beta-globin locus transcription regulation by being recruited by NFE2. Plays an important role in controlling bulk H3K4me during oocyte growth and preimplantation development. Required during the transcriptionally active period of oocyte growth for the establishment and/or maintenance of bulk H3K4 trimethylation (H3K4me3), global transcriptional silencing that preceeds resumption of meiosis, oocyte survival and normal zygotic genome activation. In Homo sapiens (Human), this protein is Histone-lysine N-methyltransferase 2B (KMT2B).